A 770-amino-acid polypeptide reads, in one-letter code: Probable copper-exporting P-type ATPase V (770 aa).

An HMA domain is found at 1–66 (MRVCVTGFNV…AITKAQHVPA (66 aa)). The interval 103 to 130 (DKPLKASRCGGRPRGPVRGSASWPGEQN) is disordered. Over residues 110-121 (RCGGRPRGPVRG) the composition is skewed to low complexity. Helical transmembrane passes span 141–161 (VWLA…FGAY), 164–184 (AGWL…WPIL), 193–213 (ALTS…FVYS), 217–237 (LFAG…FVVL), 377–397 (AVFV…WTLI), and 402–422 (VAGM…ALGL). D460 (4-aspartylphosphate intermediate) is an active-site residue. Residues D660 and D664 each coordinate Mg(2+). The next 2 helical transmembrane spans lie at 718-737 (LGWA…LGAL) and 741-760 (VAGA…SLRL).

Belongs to the cation transport ATPase (P-type) (TC 3.A.3) family. Type IB subfamily.

It is found in the cell membrane. It carries out the reaction Cu(+)(in) + ATP + H2O = Cu(+)(out) + ADP + phosphate + H(+). Functionally, necessary for copper homeostasis and likely functions as a copper exporter. Also required for full virulence. The chain is Probable copper-exporting P-type ATPase V (ctpV) from Mycobacterium tuberculosis (strain CDC 1551 / Oshkosh).